The chain runs to 191 residues: Clusterin (191 aa).

N-linked (GlcNAc...) asparagine glycans are attached at residues asparagine 79, asparagine 116, asparagine 142, and asparagine 162. Serine 184 carries the phosphoserine modification.

It belongs to the clusterin family. Antiparallel disulfide-linked heterodimer of an alpha chain and a beta chain. Self-associates and forms higher oligomers. Interacts with a broad range of misfolded proteins, including APP, APOC2 and LYZ. Slightly acidic pH promotes interaction with misfolded proteins. Forms high-molecular weight oligomers upon interaction with misfolded proteins. Interacts with APOA1, LRP2, CLUAP1 and PON1. Interacts with the complement membrane attack complex. Interacts (via alpha chain) with XRCC6. Interacts with SYVN1, COMMD1, BTRC, CUL1 and with ubiquitin and SCF (SKP1-CUL1-F-box protein) E3 ubiquitin-protein ligase complexes. Interacts (via alpha chain) with BAX in stressed cells, where BAX undergoes a conformation change leading to association with the mitochondrial membrane. Does not interact with BAX in unstressed cells. Found in a complex with LTF, CLU, EPPIN and SEMG1. Interacts (immaturely glycosylated pre-secreted form) with HSPA5; this interaction promotes CLU stability and facilitates stress-induced CLU retrotranslocation from the secretory pathway to the mitochondria, thereby reducing stress-induced apoptosis by stabilizing mitochondrial membrane integrity. Interacts with BCL2L1; this interaction releases and activates BAX and promotes cell death. Interacts with TGFBR2 and ACVR1. Interacts (secreted form) with STMN3; this interaction may act as an important modulator during neuronal differentiation. Proteolytically cleaved on its way through the secretory system, probably within the Golgi lumen. Proteolytic cleavage is not necessary for its chaperone activity. All non-secreted forms are not proteolytically cleaved. Chaperone activity of uncleaved forms is dependent on a non-reducing environment. In terms of processing, polyubiquitinated, leading to proteasomal degradation. Under cellular stress, the intracellular level of cleaved form is reduced due to proteasomal degradation. Post-translationally, heavily N-glycosylated. About 30% of the protein mass is comprised of complex N-linked carbohydrate. Endoplasmic reticulum (ER) stress induces changes in glycosylation status and increases level of hypoglycosylated forms. Core carbohydrates are essential for chaperone activity. Non-secreted forms are hypoglycosylated or unglycosylated.

The protein localises to the secreted. It localises to the nucleus. It is found in the cytoplasm. Its subcellular location is the mitochondrion membrane. The protein resides in the cytosol. The protein localises to the microsome. It localises to the endoplasmic reticulum. It is found in the mitochondrion. Its subcellular location is the perinuclear region. The protein resides in the cytoplasmic vesicle. The protein localises to the secretory vesicle. It localises to the chromaffin granule. Its function is as follows. Functions as extracellular chaperone that prevents aggregation of non native proteins. Prevents stress-induced aggregation of blood plasma proteins. Inhibits formation of amyloid fibrils by APP, APOC2, B2M, CALCA, CSN3, SNCA and aggregation-prone LYZ variants (in vitro). Does not require ATP. Maintains partially unfolded proteins in a state appropriate for subsequent refolding by other chaperones, such as HSPA8/HSC70. Does not refold proteins by itself. Binding to cell surface receptors triggers internalization of the chaperone-client complex and subsequent lysosomal or proteasomal degradation. When secreted, protects cells against apoptosis and against cytolysis by complement: inhibits assembly of the complement membrane attack complex (MAC) by preventing polymerization of C9 pore component of the MAC complex. Intracellular forms interact with ubiquitin and SCF (SKP1-CUL1-F-box protein) E3 ubiquitin-protein ligase complexes and promote the ubiquitination and subsequent proteasomal degradation of target proteins. Promotes proteasomal degradation of COMMD1 and IKBKB. Modulates NF-kappa-B transcriptional activity. Following stress, promotes apoptosis. Inhibits apoptosis when associated with the mitochondrial membrane by interference with BAX-dependent release of cytochrome c into the cytoplasm. Plays a role in the regulation of cell proliferation. An intracellular form suppresses stress-induced apoptosis by stabilizing mitochondrial membrane integrity through interaction with HSPA5. Secreted form does not affect caspase or BAX-mediated intrinsic apoptosis and TNF-induced NF-kappa-B-activity. Secreted form act as an important modulator during neuronal differentiation through interaction with STMN3. Plays a role in the clearance of immune complexes that arise during cell injury. The protein is Clusterin of Mesocricetus auratus (Golden hamster).